A 514-amino-acid polypeptide reads, in one-letter code: Xylose import ATP-binding protein XylG (514 aa).

ABC transporter domains are found at residues 7 to 246 (FEMR…VGRE) and 263 to 508 (LEAR…IHAE). Position 39–46 (39–46 (GENGAGKS)) interacts with ATP.

It belongs to the ABC transporter superfamily. Xylose importer (TC 3.A.1.2.4) family. The complex is composed of two ATP-binding proteins (XylG), two transmembrane proteins (XylH) and a solute-binding protein (XylF).

The protein resides in the cell inner membrane. It carries out the reaction D-xylose(out) + ATP + H2O = D-xylose(in) + ADP + phosphate + H(+). Its function is as follows. Part of the ABC transporter complex XylFGH involved in xylose import. Responsible for energy coupling to the transport system. The sequence is that of Xylose import ATP-binding protein XylG from Ralstonia nicotianae (strain ATCC BAA-1114 / GMI1000) (Ralstonia solanacearum).